The primary structure comprises 285 residues: Transcription factor E2F6 (285 aa).

A Glycyl lysine isopeptide (Lys-Gly) (interchain with G-Cter in SUMO2) cross-link involves residue Lys9. Residues 50 to 129 (YVSMRKALKV…SKNHIRWIGS (80 aa)) mediate DNA binding. Positions 95 to 129 (KLGVRKRRVYDITNVLDGIDLVEKKSKNHIRWIGS) match the DEF box motif. The segment at 130 to 222 (DLSNFGAVPQ…PAPKEDSITV (93 aa)) is dimerization. The tract at residues 143–164 (LQEELSDLSAMEDALDELIKDC) is leucine-zipper. A transcription repression region spans residues 173–285 (DDKENERLAY…QSEEVLEVSN (113 aa)). A disordered region spans residues 240-285 (QGSHSSNKTSDNVGTSSSKSKPLEHPQPEKEENPPQQSEEVLEVSN). Over residues 241 to 259 (GSHSSNKTSDNVGTSSSKS) the composition is skewed to polar residues. A compositionally biased stretch (basic and acidic residues) spans 260 to 272 (KPLEHPQPEKEEN).

The protein belongs to the E2F/DP family. As to quaternary structure, forms heterodimers with DP family members TFDP1 or TFDP2. Component of the DRTF1/E2F transcription factor complex. Part of the E2F6.com-1 complex in G0 phase composed of E2F6, MGA, MAX, TFDP1, CBX3, BAT8, EUHMTASE1, RING1, RNF2, MBLR, L3MBTL2 and YAF2. Component of some MLL1/MLL complex, at least composed of the core components KMT2A/MLL1, ASH2L, HCFC1/HCF1, WDR5 and RBBP5, as well as the facultative components BACC1, CHD8, E2F6, HSP70, INO80C, KANSL1, LAS1L, MAX, MCRS1, MGA, KAT8/MOF, PELP1, PHF20, PRP31, RING2, RUVB1/TIP49A, RUVB2/TIP49B, SENP3, TAF1, TAF4, TAF6, TAF7, TAF9 and TEX10.

The protein resides in the nucleus. Its function is as follows. Inhibitor of E2F-dependent transcription. Binds DNA cooperatively with DP proteins through the E2 recognition site, 5'-TTTC[CG]CGC-3'. Has a preference for the 5'-TTTCCCGC-3' E2F recognition site. E2F6 lacks the transcriptional activation and pocket protein binding domains. Appears to regulate a subset of E2F-dependent genes whose products are required for entry into the cell cycle but not for normal cell cycle progression. Represses expression of some meiosis-specific genes, including SLC25A31/ANT4. May silence expression via the recruitment of a chromatin remodeling complex containing histone H3-K9 methyltransferase activity. Overexpression delays the exit of cells from the S-phase. This Bos taurus (Bovine) protein is Transcription factor E2F6.